Here is a 589-residue protein sequence, read N- to C-terminus: Serine/threonine-protein kinase STE7 homolog (589 aa).

Positions 1–18 (MTRTTRIDTQEATKHKDL) are enriched in basic and acidic residues. Disordered stretches follow at residues 1-162 (MTRT…DPDN) and 185-233 (RQHY…ASSQ). The segment covering 24-33 (PLSLSSNPNP) has biased composition (low complexity). Residues 57 to 69 (VKSTSGSLRSSDM) are compositionally biased toward polar residues. Low complexity predominate over residues 92-121 (PTASSSATSTPTSNITGSSSASSIQFAQKS). 2 stretches are compositionally biased toward polar residues: residues 127 to 136 (IVSQTLSRPS) and 144 to 162 (SGYSSLNVNQSNRNVDPDN). Positions 185 to 203 (RQHYQNSHHHLPTTNRKRQ) are enriched in basic residues. Positions 206 to 220 (ISSISPTKSSAASSS) are enriched in low complexity. Positions 221 to 233 (LEPQIQSLPASSQ) are enriched in polar residues. The Protein kinase domain occupies 249–565 (LLTLKQLGSG…QLLEDKEHFF (317 aa)). Residues 255–263 (LGSGNSGSV) and Lys-278 contribute to the ATP site. The active-site Proton acceptor is the Asp-374. Ser-402 bears the Phosphoserine mark. Thr-408 carries the post-translational modification Phosphothreonine. Residues 473–499 (IAAERNGQNSPSRSRKNKQKGNGYNSY) are disordered.

It belongs to the protein kinase superfamily. STE Ser/Thr protein kinase family. MAP kinase kinase subfamily.

The enzyme catalyses L-seryl-[protein] + ATP = O-phospho-L-seryl-[protein] + ADP + H(+). It carries out the reaction L-threonyl-[protein] + ATP = O-phospho-L-threonyl-[protein] + ADP + H(+). It catalyses the reaction L-tyrosyl-[protein] + ATP = O-phospho-L-tyrosyl-[protein] + ADP + H(+). The protein is Serine/threonine-protein kinase STE7 homolog (HST7) of Candida albicans (strain SC5314 / ATCC MYA-2876) (Yeast).